Here is a 119-residue protein sequence, read N- to C-terminus: Large ribosomal subunit protein bL20c (119 aa).

This sequence belongs to the bacterial ribosomal protein bL20 family.

Its subcellular location is the plastid. The protein resides in the chloroplast. Its function is as follows. Binds directly to 23S ribosomal RNA and is necessary for the in vitro assembly process of the 50S ribosomal subunit. It is not involved in the protein synthesizing functions of that subunit. The protein is Large ribosomal subunit protein bL20c of Triticum aestivum (Wheat).